A 283-amino-acid chain; its full sequence is Prepilin leader peptidase/N-methyltransferase (283 aa).

7 helical membrane-spanning segments follow: residues 13–33 (VWLL…NVVI), 106–126 (WRYP…GLLW), 128–148 (PGLA…LAAI), 153–173 (QLLP…FNLA), 176–196 (FVPL…LWLI), 216–236 (LLAA…VLIA), and 259–279 (LAFG…NVLG).

It belongs to the peptidase A24 family.

Its subcellular location is the cell inner membrane. The catalysed reaction is Typically cleaves a -Gly-|-Phe- bond to release an N-terminal, basic peptide of 5-8 residues from type IV prepilin, and then N-methylates the new N-terminal amino group, the methyl donor being S-adenosyl-L-methionine.. Plays a role in type II pseudopili formation by proteolytically removing the leader sequence from substrate proteins and subsequently monomethylating the alpha-amino group of the newly exposed N-terminal phenylalanine. Substrates include proteins required for biogenesis of the type II general secretory apparatus. The chain is Prepilin leader peptidase/N-methyltransferase (outO) from Dickeya chrysanthemi (Pectobacterium chrysanthemi).